Consider the following 593-residue polypeptide: MTAIETDTPSNKVKEDESTDLRKDREKKKRSRVKQLLADIAKQVDFWFGDVNLHKDRFLREQIEKTRDGYIDISLLASFNKMKKITTDSKLIARAVKNSSVVEINLSGTKIRRRFPLGEKPQDVDSRTVYVELLPKNVTHSWIERVFGKYGMVVYVSIPRYKSTGDPKGFAFIEFETQEQAAKAIEVLNNPPEEAPRKAGMFPKTVKNKHLPPVEVTEHSITEGCGTEEKKKKKKKKSKARKDSVEKAEEDTKEQDMDIISEGVPKRRKTVSESSVPDVQEADKQTAKKEKKKKERAESFDQSEKVRQGKRKCSSSEEHDCSSAKQKKSDTKDLPQDEKPMVTQEVLQECKELSTEEEKDAVDKKEISVPKVKRKRKKKHKERHRVGEEVIPLRVLSKTEWLVLKAEYLTLQRASMASLKKSMSEMNHISEEEMQTQPSMQSFDIKNGKVETVKNEPLGPQFVCGVIGKITSSDPLQGRKYVKDAFSGVCEVVYVDMLEGDTECHVRFKSPEDAQTAVKTRSDLQGKHNWKLQILAGDNEQRYWQKILVDRQAKLNRPREKKRGTEKLIAKAEKMRLAKTQEASKHIRFSDGF.

The span at 1-11 (MTAIETDTPSN) shows a compositional bias: polar residues. Residues 1–28 (MTAIETDTPSNKVKEDESTDLRKDREKK) are disordered. A compositionally biased stretch (basic and acidic residues) spans 12–24 (KVKEDESTDLRKD). One can recognise an HTH La-type RNA-binding domain in the interval 30 to 121 (RSRVKQLLAD…RRRFPLGEKP (92 aa)). The 79-residue stretch at 127-205 (RTVYVELLPK…PRKAGMFPKT (79 aa)) folds into the RRM domain. Positions 191-363 (PPEEAPRKAG…STEEEKDAVD (173 aa)) are disordered. Residues 231-240 (KKKKKKKSKA) show a composition bias toward basic residues. Over residues 248–259 (AEEDTKEQDMDI) the composition is skewed to acidic residues. Composition is skewed to basic and acidic residues over residues 295 to 307 (ERAE…EKVR), 314 to 340 (SSSE…DEKP), and 348 to 363 (QECK…DAVD). In terms of domain architecture, xRRM spans 461–574 (QFVCGVIGKI…TEKLIAKAEK (114 aa)).

This sequence belongs to the LARP7 family. Core component of the 7SK RNP complex. Associates with box C/D small nucleolar ribonucleoprotein (snoRNP) complexes.

It is found in the nucleus. The protein localises to the nucleoplasm. In terms of biological role, RNA-binding protein that specifically binds distinct small nuclear RNA (snRNAs) and regulates their processing and function. Specifically binds the 7SK snRNA (7SK RNA) and acts as a core component of the 7SK ribonucleoprotein (RNP) complex, thereby acting as a negative regulator of transcription elongation by RNA polymerase II. The 7SK RNP complex sequesters the positive transcription elongation factor b (P-TEFb) in a large inactive 7SK RNP complex preventing RNA polymerase II phosphorylation and subsequent transcriptional elongation. The 7SK RNP complex also promotes snRNA gene transcription by RNA polymerase II via interaction with the little elongation complex (LEC). LARP7 specifically binds to the highly conserved 3'-terminal U-rich stretch of 7SK RNA; on stimulation, remains associated with 7SK RNA, whereas P-TEFb is released from the complex. LARP7 also acts as a regulator of mRNA splicing fidelity by promoting U6 snRNA processing. Specifically binds U6 snRNAs and associates with a subset of box C/D RNP complexes: promotes U6 snRNA 2'-O-methylation by facilitating U6 snRNA loading into box C/D RNP complexes. U6 snRNA 2'-O-methylation is required for mRNA splicing fidelity. The chain is La-related protein 7 from Xenopus tropicalis (Western clawed frog).